The primary structure comprises 255 residues: Hydroxyacylglutathione hydrolase (255 aa).

Zn(2+)-binding residues include His56, His58, Asp60, His61, His114, Asp133, and His171.

Belongs to the metallo-beta-lactamase superfamily. Glyoxalase II family. Monomer. Zn(2+) serves as cofactor.

It carries out the reaction an S-(2-hydroxyacyl)glutathione + H2O = a 2-hydroxy carboxylate + glutathione + H(+). It participates in secondary metabolite metabolism; methylglyoxal degradation; (R)-lactate from methylglyoxal: step 2/2. In terms of biological role, thiolesterase that catalyzes the hydrolysis of S-D-lactoyl-glutathione to form glutathione and D-lactic acid. This chain is Hydroxyacylglutathione hydrolase, found in Rhodopseudomonas palustris (strain BisA53).